Here is a 287-residue protein sequence, read N- to C-terminus: Prepilin leader peptidase/N-methyltransferase (287 aa).

Transmembrane regions (helical) follow at residues 10–30 (LGFP…NVVI), 101–121 (ISIQ…ASVW), 125–145 (FGWQ…MSGI), 177–197 (KPAL…WWLF), 226–246 (ILPI…IWLF), and 253–273 (ATPI…FFWG).

This sequence belongs to the peptidase A24 family.

The protein localises to the cell inner membrane. The catalysed reaction is Typically cleaves a -Gly-|-Phe- bond to release an N-terminal, basic peptide of 5-8 residues from type IV prepilin, and then N-methylates the new N-terminal amino group, the methyl donor being S-adenosyl-L-methionine.. Functionally, plays an essential role in type IV pili and type II pseudopili formation by proteolytically removing the leader sequence from substrate proteins and subsequently monomethylating the alpha-amino group of the newly exposed N-terminal phenylalanine. This Xanthomonas campestris pv. campestris (strain ATCC 33913 / DSM 3586 / NCPPB 528 / LMG 568 / P 25) protein is Prepilin leader peptidase/N-methyltransferase (xpsO).